Here is a 241-residue protein sequence, read N- to C-terminus: Octanoyltransferase (241 aa).

One can recognise a BPL/LPL catalytic domain in the interval A43–P228. Substrate is bound by residues R83–H90, A159–G161, and G172–S174. C190 (acyl-thioester intermediate) is an active-site residue.

Belongs to the LipB family.

It is found in the cytoplasm. The catalysed reaction is octanoyl-[ACP] + L-lysyl-[protein] = N(6)-octanoyl-L-lysyl-[protein] + holo-[ACP] + H(+). It participates in protein modification; protein lipoylation via endogenous pathway; protein N(6)-(lipoyl)lysine from octanoyl-[acyl-carrier-protein]: step 1/2. Its function is as follows. Catalyzes the transfer of endogenously produced octanoic acid from octanoyl-acyl-carrier-protein onto the lipoyl domains of lipoate-dependent enzymes. Lipoyl-ACP can also act as a substrate although octanoyl-ACP is likely to be the physiological substrate. This Paraburkholderia xenovorans (strain LB400) protein is Octanoyltransferase.